A 122-amino-acid polypeptide reads, in one-letter code: Large ribosomal subunit protein uL14 (122 aa).

Forms a cluster with proteins L3 and L19. In the 70S ribosome, L14 and L19 interact and together make contacts with the 16S rRNA in bridges B5 and B8. Part of the 50S ribosomal subunit.

Functionally, binds to 23S rRNA. Forms part of two intersubunit bridges in the 70S ribosome. This Rhodopseudomonas palustris (strain ATCC BAA-98 / CGA009) protein is Large ribosomal subunit protein uL14.